A 250-amino-acid polypeptide reads, in one-letter code: Probable transcriptional regulatory protein tll0175 (250 aa).

It belongs to the TACO1 family.

The protein localises to the cytoplasm. The polypeptide is Probable transcriptional regulatory protein tll0175 (Thermosynechococcus vestitus (strain NIES-2133 / IAM M-273 / BP-1)).